The chain runs to 573 residues: DNA polymerase lambda (573 aa).

In terms of domain architecture, BRCT spans 35 to 131; it reads DARGWLSSLR…KLTDTDGFSL (97 aa). The segment at 126–235 is disordered; that stretch reads TDGFSLSSPK…GPDPAPEALG (110 aa). Positions 127 to 149 are enriched in polar residues; sequence DGFSLSSPKRSLNEPQPSKSGQD. Residues 263–277 form a DNA-binding region; the sequence is KAYNVQGDKWRALGY. Lysine 310 functions as the Schiff-base intermediate with DNA in the catalytic mechanism. Residues 343-346 are DNA-binding; the sequence is GTKT. DCTP contacts are provided by residues arginine 384, 415 to 418, and 424 to 427; these read SFRR and GDVD. Positions 418–427 are involved in primer binding; it reads RGKVTCGDVD. Mn(2+)-binding residues include aspartate 425, aspartate 427, and aspartate 488. Positions 464–503 are DNA-binding; that stretch reads ENGQQQKYLGVCRLPGAGQRHRRLDIIVVPYSEFACALLY. Asparagine 511 provides a ligand contact to dCTP.

Belongs to the DNA polymerase type-X family. As to quaternary structure, interacts with PCNA. Interacts with PAXX; promoting POLL recruitment to double-strand breaks (DSBs) and stimulation of the end-filling activity of POLL. Interacts with XRCC4; promoting POLL recruitment to double-strand breaks (DSBs) and stimulation of the end-filling activity of POLL. Interacts with NHEJ1/XLF; promoting POLL recruitment to double-strand breaks (DSBs) and stimulation of the end-filling activity of POLL. Mn(2+) is required as a cofactor.

The protein localises to the nucleus. It catalyses the reaction DNA(n) + a 2'-deoxyribonucleoside 5'-triphosphate = DNA(n+1) + diphosphate. Its function is as follows. DNA polymerase that functions in several pathways of DNA repair. Involved in base excision repair (BER) responsible for repair of lesions that give rise to abasic (AP) sites in DNA. Also contributes to DNA double-strand break repair by non-homologous end joining and homologous recombination. Has both template-dependent and template-independent (terminal transferase) DNA polymerase activities. Also has a 5'-deoxyribose-5-phosphate lyase (dRP lyase) activity. This chain is DNA polymerase lambda, found in Rattus norvegicus (Rat).